The sequence spans 191 residues: MESNNNEKKKVARQSSSFRLRSPSLNALRLQRIFDLFDKNGDGFITVEELSQALTRLGLNADLSDLKSTVESYIQPGNTGLNFDDFSSLHKTLDDSFFGGACGGGENEDDPSSAAENESDLAEAFKVFDENGDGFISARELQTVLKKLGLPEGGEMERVEKMIVSVDRNQDGRVDFFEFKNMMRTVVIPSS.

EF-hand domains are found at residues 25–60 (LNALRLQRIFDLFDKNGDGFITVEELSQALTRLGLN), 116–151 (ENESDLAEAFKVFDENGDGFISARELQTVLKKLGLP), and 154–189 (GEMERVEKMIVSVDRNQDGRVDFFEFKNMMRTVVIP). Positions 38, 40, 42, 49, 129, 131, 133, 140, 167, 169, 171, 173, and 178 each coordinate Ca(2+).

In terms of assembly, interacts with KIC. In terms of tissue distribution, expressed in seedling shoots, roots, rosette leaves and flowers. Expressed in the leaf trichome support cells.

Functionally, probable calcium sensor that binds calcium in vitro. Involved in the regulation of trichome branching. The chain is Calcium-binding protein CML42 (CML42) from Arabidopsis thaliana (Mouse-ear cress).